Here is a 435-residue protein sequence, read N- to C-terminus: 5'-deoxyadenosine deaminase (435 aa).

Zn(2+) contacts are provided by His64 and His66. Positions 93 and 185 each coordinate substrate. His212 serves as a coordination point for Zn(2+). 2 residues coordinate substrate: Glu215 and Asp300. Asp300 contributes to the Zn(2+) binding site.

This sequence belongs to the metallo-dependent hydrolases superfamily. MTA/SAH deaminase family. As to quaternary structure, homotetramer. Zn(2+) serves as cofactor.

It catalyses the reaction 5'-deoxyadenosine + H2O + H(+) = 5'-deoxyinosine + NH4(+). It carries out the reaction S-adenosyl-L-homocysteine + H2O + H(+) = S-inosyl-L-homocysteine + NH4(+). The enzyme catalyses S-methyl-5'-thioadenosine + H2O + H(+) = S-methyl-5'-thioinosine + NH4(+). The catalysed reaction is adenosine + H2O + H(+) = inosine + NH4(+). It participates in amino-acid biosynthesis; S-adenosyl-L-methionine biosynthesis. Functionally, catalyzes the deamination of three SAM-derived enzymatic products, namely 5'-deoxyadenosine, S-adenosyl-L-homocysteine, and 5'-methylthioadenosine, to produce the inosine analogs. Can also deaminate adenosine. The preferred substrate for this enzyme is 5'-deoxyadenosine, but all these substrates are efficiently deaminated. Likely functions in a S-adenosyl-L-methionine (SAM) recycling pathway from S-adenosyl-L-homocysteine (SAH) produced from SAM-dependent methylation reactions. May also be involved in the recycling of 5'-deoxyadenosine, whereupon the 5'-deoxyribose moiety of 5'-deoxyinosine is further metabolized to deoxyhexoses used for the biosynthesis of aromatic amino acids in methanogens. In Methanobrevibacter smithii (strain ATCC 35061 / DSM 861 / OCM 144 / PS), this protein is 5'-deoxyadenosine deaminase.